A 277-amino-acid chain; its full sequence is MAFSGTSRTLTQQSSAASTDELHNILFSRRAIQEMATKCDLGRHHWMRADNAVCVRPLVPETTSNLLTRWFVSGYEAGELPSKGYMSVPQVLCAVTRTVTSDAEGSLRIYLADLGDKERAPIDAQVVSLHNRDLPAIVSFHPTYDCPMEQLNGVGRCFALVIERCGYIGHNGTTASVCSNWQPKFSSKNNNYKPAAAGKTLVLPYDRLSELSGPSAVARLLKSQLNMSASRIQLPGYVFNVRYVVSLRILRNRQSQPNARVDSEPQVFSKPVVVNGI.

The protein belongs to the cucumovirus movement protein family.

It localises to the host cell junction. Its subcellular location is the host plasmodesma. Transports viral genome to neighboring plant cells directly through plasmosdesmata, without any budding. The movement protein allows efficient cell to cell propagation, by bypassing the host cell wall barrier. Acts by forming a tubular structure at the host plasmodesmata, enlarging it enough to allow free passage of virion capsids. The protein is Movement protein of Canna (Florist's daisy).